A 454-amino-acid polypeptide reads, in one-letter code: tRNA-2-methylthio-N(6)-dimethylallyladenosine synthase (454 aa).

In terms of domain architecture, MTTase N-terminal spans 6-122 (RRYHITTFGC…LQDLLQEVLA (117 aa)). The [4Fe-4S] cluster site is built by Cys15, Cys51, Cys85, Cys157, Cys161, and Cys164. The Radical SAM core domain maps to 143–380 (RESTVTAWVN…NHLVAIKAAE (238 aa)). In terms of domain architecture, TRAM spans 383–447 (QRYLGRIEEV…AFSLTGEPVK (65 aa)).

The protein belongs to the methylthiotransferase family. MiaB subfamily. In terms of assembly, monomer. It depends on [4Fe-4S] cluster as a cofactor.

It is found in the cytoplasm. It catalyses the reaction N(6)-dimethylallyladenosine(37) in tRNA + (sulfur carrier)-SH + AH2 + 2 S-adenosyl-L-methionine = 2-methylsulfanyl-N(6)-dimethylallyladenosine(37) in tRNA + (sulfur carrier)-H + 5'-deoxyadenosine + L-methionine + A + S-adenosyl-L-homocysteine + 2 H(+). Functionally, catalyzes the methylthiolation of N6-(dimethylallyl)adenosine (i(6)A), leading to the formation of 2-methylthio-N6-(dimethylallyl)adenosine (ms(2)i(6)A) at position 37 in tRNAs that read codons beginning with uridine. This Gloeothece citriformis (strain PCC 7424) (Cyanothece sp. (strain PCC 7424)) protein is tRNA-2-methylthio-N(6)-dimethylallyladenosine synthase.